We begin with the raw amino-acid sequence, 212 residues long: Orotate phosphoribosyltransferase (212 aa).

Lysine 26 serves as a coordination point for 5-phospho-alpha-D-ribose 1-diphosphate. Position 34–35 (34–35 (FF)) interacts with orotate. 5-phospho-alpha-D-ribose 1-diphosphate-binding positions include 72-73 (YK), arginine 98, lysine 99, lysine 102, histidine 104, and 123-131 (DDVITAGTA). Threonine 127 and arginine 155 together coordinate orotate.

This sequence belongs to the purine/pyrimidine phosphoribosyltransferase family. PyrE subfamily. In terms of assembly, homodimer. Mg(2+) serves as cofactor.

The enzyme catalyses orotidine 5'-phosphate + diphosphate = orotate + 5-phospho-alpha-D-ribose 1-diphosphate. It participates in pyrimidine metabolism; UMP biosynthesis via de novo pathway; UMP from orotate: step 1/2. In terms of biological role, catalyzes the transfer of a ribosyl phosphate group from 5-phosphoribose 1-diphosphate to orotate, leading to the formation of orotidine monophosphate (OMP). The chain is Orotate phosphoribosyltransferase from Marinobacter nauticus (strain ATCC 700491 / DSM 11845 / VT8) (Marinobacter aquaeolei).